Consider the following 275-residue polypeptide: Large ribosomal subunit protein uL2 (275 aa).

The span at 38 to 53 shows a compositional bias: polar residues; it reads SSKAGRNNNGRITTRH. 2 disordered regions span residues 38 to 59 and 224 to 257; these read SSKAGRNNNGRITTRHQGGGHK and AMNPIDHPHGGGEGRTAAGRDPVSPWGTPTKGFR.

Belongs to the universal ribosomal protein uL2 family. As to quaternary structure, part of the 50S ribosomal subunit. Forms a bridge to the 30S subunit in the 70S ribosome.

One of the primary rRNA binding proteins. Required for association of the 30S and 50S subunits to form the 70S ribosome, for tRNA binding and peptide bond formation. It has been suggested to have peptidyltransferase activity; this is somewhat controversial. Makes several contacts with the 16S rRNA in the 70S ribosome. The polypeptide is Large ribosomal subunit protein uL2 (Burkholderia multivorans (strain ATCC 17616 / 249)).